Here is a 110-residue protein sequence, read N- to C-terminus: uncharacterized protein (110 aa).

The chain crosses the membrane as a helical span at residues 88–108 (LTRICLLIFGIGLVVLIFLKL).

It localises to the membrane. This is an uncharacterized protein from Rickettsia prowazekii (strain Madrid E).